We begin with the raw amino-acid sequence, 84 residues long: UPF0473 protein CPF_2030 (84 aa).

It belongs to the UPF0473 family.

This Clostridium perfringens (strain ATCC 13124 / DSM 756 / JCM 1290 / NCIMB 6125 / NCTC 8237 / Type A) protein is UPF0473 protein CPF_2030.